We begin with the raw amino-acid sequence, 65 residues long: Large ribosomal subunit protein bL35 (65 aa).

The protein belongs to the bacterial ribosomal protein bL35 family.

This Parabacteroides distasonis (strain ATCC 8503 / DSM 20701 / CIP 104284 / JCM 5825 / NCTC 11152) protein is Large ribosomal subunit protein bL35.